Reading from the N-terminus, the 69-residue chain is Disintegrin EC6 subunit beta (69 aa).

A Disintegrin domain is found at 1–65 (NSVHPCCDPV…DCPPNPWNGK (65 aa)). 4 disulfide bridges follow: Cys6-Cys29, Cys20-Cys26, Cys25-Cys50, and Cys38-Cys57. The short motif at 42–44 (RGD) is the Cell attachment site element.

The protein belongs to the venom metalloproteinase (M12B) family. P-II subfamily. P-IIe sub-subfamily. As to quaternary structure, heterodimer with subunit alpha; disulfide-linked. Expressed by the venom gland.

It is found in the secreted. In terms of biological role, potently inhibits adhesion of alpha-4/beta-1 (ITGA4/ITGB1) and alpha-9/beta-1 (ITGA9/ITGB1) integrins to VCAM1, and adhesion of alpha-5/beta-1 (ITGA5/ITGB1) integrin to fibronectin. Has a much less effect on alpha-IIb/beta-3 (ITGA2B/ITGB3) integrin. Also potently inhibits neutrophil migration across TNF-alpha-activated human umbilical endothelial cells. The sequence is that of Disintegrin EC6 subunit beta from Echis carinatus sochureki (Saw-scaled viper).